The following is a 320-amino-acid chain: Solute carrier family 25 member 33 (320 aa).

3 Solcar repeats span residues 9–118 (ENTL…AKEQ), 126–213 (NSNT…LKKC), and 231–315 (SGFF…IVYL). A run of 6 helical transmembrane segments spans residues 12 to 32 (LLHL…TCPL), 49 to 65 (VYYP…AGMV), 121 to 141 (GIFV…AAFV), 190 to 210 (LTAS…YESL), 233 to 253 (FFGL…IAYP), and 298 to 318 (QIPN…LLGE).

It belongs to the mitochondrial carrier (TC 2.A.29) family.

It localises to the mitochondrion inner membrane. The enzyme catalyses UTP(in) + UDP(out) = UTP(out) + UDP(in). It catalyses the reaction dUTP(out) + UTP(in) = dUTP(in) + UTP(out). It carries out the reaction 5-methyl-UTP(out) + UTP(in) = 5-methyl-UTP(in) + UTP(out). The catalysed reaction is 5-methyl-UDP(out) + UTP(in) = 5-methyl-UDP(in) + UTP(out). The enzyme catalyses UTP(in) + CTP(out) = UTP(out) + CTP(in). It catalyses the reaction CDP(out) + UTP(in) = CDP(in) + UTP(out). It carries out the reaction dCTP(out) + UTP(in) = dCTP(in) + UTP(out). The catalysed reaction is dCDP(out) + UTP(in) = dCDP(in) + UTP(out). The enzyme catalyses UTP(in) + GTP(out) = UTP(out) + GTP(in). It catalyses the reaction UTP(in) + GDP(out) = UTP(out) + GDP(in). It carries out the reaction dGTP(out) + UTP(in) = dGTP(in) + UTP(out). The catalysed reaction is dGDP(out) + UTP(in) = dGDP(in) + UTP(out). The enzyme catalyses ITP(out) + UTP(in) = ITP(in) + UTP(out). In terms of biological role, mitochondrial transporter that imports/exports pyrimidine nucleotides into and from mitochondria. Selectively transports uridine, thymidine, guanosine, cytosine and inosine (deoxy)nucleoside di- and triphosphates by an antiport mechanism. May import (deoxy)nucleoside triphosphates in exchange for intramitochondrial (deoxy)nucleoside diphosphates, thus providing precursors necessary for de novo synthesis of mitochondrial DNA and RNA while exporting products of their catabolism. Participates in mitochondrial genome maintenance, regulation of mitochondrial membrane potential and mitochondrial respiration. Upon INS or IGF1 stimulation regulates cell growth and proliferation by controlling mitochondrial DNA replication and transcription, the ratio of mitochondria-to nuclear-encoded components of the electron transport chain resulting in control of mitochondrial ROS production. Participates in dendritic cell endocytosis and may associate with mitochondrial oxidative phosphorylation. In Mus musculus (Mouse), this protein is Solute carrier family 25 member 33 (Slc25a33).